Here is a 160-residue protein sequence, read N- to C-terminus: Transcription elongation factor GreA (160 aa).

The protein belongs to the GreA/GreB family.

Its function is as follows. Necessary for efficient RNA polymerase transcription elongation past template-encoded arresting sites. The arresting sites in DNA have the property of trapping a certain fraction of elongating RNA polymerases that pass through, resulting in locked ternary complexes. Cleavage of the nascent transcript by cleavage factors such as GreA or GreB allows the resumption of elongation from the new 3'terminus. GreA releases sequences of 2 to 3 nucleotides. The protein is Transcription elongation factor GreA of Leuconostoc citreum (strain KM20).